A 340-amino-acid chain; its full sequence is MNTMKTTYIVLELIIAVLSIAGNVLVCWAVAINSTLKNATNYFLVSLAVADIAVGLLAIPFAITISIGFQVDFHSCLFFACFVLVLTQSSIFSLLAVAIDRYLAIKIPLRYNSLVTGKRARGLIAVLWLLSFVIGLTPLMGWNKAMSGCPNSTNETGADHGAGHHGCFISCLFENVVTMSYMVYFNFFGCVLLPLIIMLGIYIKIFMVACKQLHQIELMGNSRTTLQKEVHAAKSLAIIVGLFAFCWLPLHILNCITHFHEEFSKSKPEWVMYVAIILSHANSVINPIIYAYRIRDFRYTFHKIISKILCKTDDFPKCTTDNNQHLTVTNVNAPAASVTI.

Residues 1–6 (MNTMKT) lie on the Extracellular side of the membrane. The helical transmembrane segment at 7-31 (TYIVLELIIAVLSIAGNVLVCWAVA) threads the bilayer. Residues 32–41 (INSTLKNATN) lie on the Cytoplasmic side of the membrane. A helical membrane pass occupies residues 42-65 (YFLVSLAVADIAVGLLAIPFAITI). Residues 66–76 (SIGFQVDFHSC) are Extracellular-facing. C76 and C171 are oxidised to a cystine. The helical transmembrane segment at 77-99 (LFFACFVLVLTQSSIFSLLAVAI) threads the bilayer. At 100-119 (DRYLAIKIPLRYNSLVTGKR) the chain is on the cytoplasmic side. Residues 120 to 142 (ARGLIAVLWLLSFVIGLTPLMGW) traverse the membrane as a helical segment. Residues 143 to 178 (NKAMSGCPNSTNETGADHGAGHHGCFISCLFENVVT) are Extracellular-facing. N-linked (GlcNAc...) asparagine glycans are attached at residues N151 and N154. E174 contributes to the adenosine binding site. Residues 179–203 (MSYMVYFNFFGCVLLPLIIMLGIYI) traverse the membrane as a helical segment. The Cytoplasmic portion of the chain corresponds to 204–235 (KIFMVACKQLHQIELMGNSRTTLQKEVHAAKS). The chain crosses the membrane as a helical span at residues 236–259 (LAIIVGLFAFCWLPLHILNCITHF). N254 lines the adenosine pocket. The Extracellular portion of the chain corresponds to 260-267 (HEEFSKSK). Residues 268-291 (PEWVMYVAIILSHANSVINPIIYA) traverse the membrane as a helical segment. Positions 279 and 280 each coordinate adenosine. Over 292–340 (YRIRDFRYTFHKIISKILCKTDDFPKCTTDNNQHLTVTNVNAPAASVTI) the chain is Cytoplasmic. C310 carries the S-palmitoyl cysteine lipid modification.

It belongs to the G-protein coupled receptor 1 family.

Its subcellular location is the cell membrane. In terms of biological role, receptor for adenosine. The activity of this receptor is mediated by G proteins which activate adenylyl cyclase. This Gallus gallus (Chicken) protein is Adenosine receptor A2b (ADORA2B).